Consider the following 342-residue polypeptide: Aquaporin-7 (342 aa).

Residues 1 to 36 are Cytoplasmic-facing; it reads MVQASGHRRSTRGSKMVSWSVIAKIQEILQRKMVRE. Ser-20 carries the post-translational modification Phosphoserine. A helical transmembrane segment spans residues 37–54; that stretch reads FLAEFMSTYVMMVFGLGS. The Extracellular portion of the chain corresponds to 55 to 67; it reads VAHMVLNKKYGSY. A helical transmembrane segment spans residues 68-85; that stretch reads LGVNLGFGFGVTMGVHVA. Topologically, residues 86–89 are cytoplasmic; sequence GRIS. An intramembrane region (discontinuously helical) is located at residues 90–103; the sequence is GAHMNAAVTFANCA. The NPA 1 motif lies at 94–96; it reads NAA. Topologically, residues 104-111 are cytoplasmic; sequence LGRVPWRK. Residues 112 to 132 form a helical membrane-spanning segment; that stretch reads FPVYVLGQFLGSFLAAATIYS. Over 133-170 the chain is Extracellular; it reads LFYTAILHFSGGQLMVTGPVATAGIFATYLPDHMTLWR. The helical transmembrane segment at 171-188 threads the bilayer; the sequence is GFLNEAWLTGMLQLCLFA. Topologically, residues 189-200 are cytoplasmic; the sequence is ITDQENNPALPG. The chain crosses the membrane as a helical span at residues 201 to 217; the sequence is TEALVIGILVVIIGVSL. Residues 218 to 221 are Extracellular-facing; that stretch reads GMNT. An intramembrane region (discontinuously helical) is located at residues 222 to 235; that stretch reads GYAINPSRDLPPRI. The NPA 2 motif lies at 226-228; it reads NPS. Residues 236–253 lie on the Extracellular side of the membrane; that stretch reads FTFIAGWGKQVFSNGENW. Residues 254-275 traverse the membrane as a helical segment; that stretch reads WWVPVVAPLLGAYLGGIIYLVF. Topologically, residues 276–342 are cytoplasmic; that stretch reads IGSTIPREPL…LHESMALEHF (67 aa).

The protein belongs to the MIP/aquaporin (TC 1.A.8) family. In terms of assembly, homotetramer; each monomer provides an independent glycerol/water pore. Two homotetramers on opposing membranes can dimerize, forming a cell-cell junction. Interacts with PLIN1. In terms of processing, phosphorylation by PKA could prevent the interaction with PLIN1. Detected in the sperm head (at protein level). Detected in white adipose tissue.

The protein localises to the cell membrane. It is found in the cytoplasmic vesicle membrane. Its subcellular location is the lipid droplet. It catalyses the reaction glycerol(in) = glycerol(out). The catalysed reaction is H2O(in) = H2O(out). It carries out the reaction urea(in) = urea(out). With respect to regulation, glycerol transport is regulated by pH, with the porin being permeable to glycerol at pH 7.4 but not at pH 5.5. Water permeability, however, is not influenced by pH. Inhibited by mercury ions. Functionally, aquaglyceroporins form homotetrameric transmembrane channels, with each monomer independently mediating glycerol and water transport across the plasma membrane along their osmotic gradient. Could also be permeable to urea. Mediates the efflux of glycerol, formed upon triglyceride hydrolysis, to avoid its accumulation in adipocytes and to make it available to other tissues. In the kidney, mediates the reabsorption of glycerol, preventing its loss in urine, again participating to energy homeostasis. In pancreatic beta cells, it also mediates the efflux of glycerol, regulating its intracellular levels. The polypeptide is Aquaporin-7 (Homo sapiens (Human)).